Reading from the N-terminus, the 337-residue chain is Putative [LysW]-lysine/[LysW]-ornithine hydrolase (337 aa).

A Zn(2+)-binding site is contributed by histidine 67. Aspartate 69 is a catalytic residue. Zn(2+) is bound at residue aspartate 91. Residue glutamate 118 is the Proton acceptor of the active site. Zn(2+) contacts are provided by glutamate 119, glutamate 140, and histidine 298.

It belongs to the peptidase M20A family. LysK subfamily. Zn(2+) is required as a cofactor. The cofactor is Co(2+).

The protein resides in the cytoplasm. It catalyses the reaction [amino-group carrier protein]-C-terminal-gamma-(L-lysyl)-L-glutamate + H2O = [amino-group carrier protein]-C-terminal-L-glutamate + L-lysine. It carries out the reaction [amino-group carrier protein]-C-terminal-gamma-(L-ornithyl)-L-glutamate + H2O = [amino-group carrier protein]-C-terminal-L-glutamate + L-ornithine. The protein operates within amino-acid biosynthesis; L-lysine biosynthesis via AAA pathway; L-lysine from L-alpha-aminoadipate (Thermus route): step 5/5. It functions in the pathway amino-acid biosynthesis; L-arginine biosynthesis. Functionally, catalyzes the release of L-lysine from [LysW]-gamma-L-lysine and the release of L-ornithine from [LysW]-L-ornithine. The chain is Putative [LysW]-lysine/[LysW]-ornithine hydrolase from Pyrococcus abyssi (strain GE5 / Orsay).